Consider the following 84-residue polypeptide: Small ribosomal subunit protein bS20 (84 aa).

This sequence belongs to the bacterial ribosomal protein bS20 family.

Binds directly to 16S ribosomal RNA. The sequence is that of Small ribosomal subunit protein bS20 from Bacteroides thetaiotaomicron (strain ATCC 29148 / DSM 2079 / JCM 5827 / CCUG 10774 / NCTC 10582 / VPI-5482 / E50).